We begin with the raw amino-acid sequence, 197 residues long: ATP-dependent Clp protease proteolytic subunit (197 aa).

The active-site Nucleophile is Ser98. His123 is an active-site residue.

Belongs to the peptidase S14 family. As to quaternary structure, fourteen ClpP subunits assemble into 2 heptameric rings which stack back to back to give a disk-like structure with a central cavity, resembling the structure of eukaryotic proteasomes.

It localises to the cytoplasm. The catalysed reaction is Hydrolysis of proteins to small peptides in the presence of ATP and magnesium. alpha-casein is the usual test substrate. In the absence of ATP, only oligopeptides shorter than five residues are hydrolyzed (such as succinyl-Leu-Tyr-|-NHMec, and Leu-Tyr-Leu-|-Tyr-Trp, in which cleavage of the -Tyr-|-Leu- and -Tyr-|-Trp bonds also occurs).. In terms of biological role, cleaves peptides in various proteins in a process that requires ATP hydrolysis. Has a chymotrypsin-like activity. Plays a major role in the degradation of misfolded proteins. The protein is ATP-dependent Clp protease proteolytic subunit of Ligilactobacillus salivarius (strain UCC118) (Lactobacillus salivarius).